Reading from the N-terminus, the 133-residue chain is Nucleoside diphosphate kinase (133 aa).

ATP contacts are provided by Lys9, Phe57, Arg85, Thr91, Arg102, and Asn112. Residue His115 is the Pros-phosphohistidine intermediate of the active site.

This sequence belongs to the NDK family. Homotetramer. The cofactor is Mg(2+).

Its subcellular location is the cytoplasm. The enzyme catalyses a 2'-deoxyribonucleoside 5'-diphosphate + ATP = a 2'-deoxyribonucleoside 5'-triphosphate + ADP. It catalyses the reaction a ribonucleoside 5'-diphosphate + ATP = a ribonucleoside 5'-triphosphate + ADP. Its function is as follows. Major role in the synthesis of nucleoside triphosphates other than ATP. The ATP gamma phosphate is transferred to the NDP beta phosphate via a ping-pong mechanism, using a phosphorylated active-site intermediate. The protein is Nucleoside diphosphate kinase of Rubrobacter xylanophilus (strain DSM 9941 / JCM 11954 / NBRC 16129 / PRD-1).